We begin with the raw amino-acid sequence, 1227 residues long: Pentatricopeptide repeat-containing protein At5g15280, mitochondrial (1227 aa).

The N-terminal 31 residues, Met1–Phe31, are a transit peptide targeting the mitochondrion. PPR repeat units follow at residues Leu146–Met180, Asn182–Pro216, Leu217–Leu251, Asn255–Leu289, Asn290–Glu320, Asp322–Gln356, Asp357–Pro391, Asp392–Leu426, Ser427–Glu461, Val527–Leu561, Ser562–Leu597, Asp598–Ile632, Asp633–Pro667, Asp668–Ser698, Gln703–Val737, Glu738–Pro772, Ser773–Ile800, Ser802–Ser836, Tyr837–Cys871, Ser872–Pro906, Gly908–Pro942, Asp943–Pro977, Asn978–Leu1012, Ser1014–Asn1044, Met1047–Pro1081, Gly1082–Pro1116, Ser1117–Pro1151, and Ser1152–Val1186.

Belongs to the PPR family. P subfamily.

It localises to the mitochondrion. The sequence is that of Pentatricopeptide repeat-containing protein At5g15280, mitochondrial from Arabidopsis thaliana (Mouse-ear cress).